A 92-amino-acid chain; its full sequence is Alpha-conotoxin FrXXA 2 (92 aa).

The signal sequence occupies residues M1–G24. The propeptide occupies Q25 to R45. 4 disulfide bridges follow: C63–C72, C68–C80, C73–C90, and C78–C92.

It belongs to the conotoxin D superfamily. Homodimer; disulfide-linked. The homodimer contains 10 disulfide bonds. Expressed by the venom duct.

Its subcellular location is the secreted. Alpha-conotoxins act on postsynaptic membranes, they bind to the nicotinic acetylcholine receptors (nAChR) and thus inhibit them. Through its two C-terminal domains, this homodimeric protein would bind to two nAChR allosteric sites, located outside the nAChR C-loop of the principal binding face and at the adjacent binding interface in a clockwise direction. Component 4b which seems to correspond to this toxin blocks both neuronal and muscular subtypes: human alpha-7/CHRNA7 (IC(50)=125 nM), human alpha-3-beta-2 (CHRNA3-CHRNB2) (IC(50)=282 nM), human alpha-4-beta-2 (CHRNA4-CHRNB2) (IC(50)=697 nM), mouse adult muscular subtype alpha-1-beta-1-delta-epsilon (CHRNA1-CHRNB1-CHRND-CHRNE) (IC(50)=351 nM), and mouse fetal muscular subtype alpha-1-beta-1-gamma-delta (CHRNA1-CHRNB1-CHRNG-CHRND) (IC(50)=447 nM). It shows different dissociation rates towards the different subtypes, with a very slow rate towards alpha-7 subtype (almost irreversible), followed by the adult muscular subtype, the fetal muscular subtype, alpha-3-beta-2 and alpha-4-beta-2 (almost entirely reversible within a few minutes of washing). This chain is Alpha-conotoxin FrXXA 2, found in Conus fergusoni (Ferguson's cone).